The sequence spans 401 residues: Heparan-sulfate 6-O-sulfotransferase 1 (401 aa).

Topologically, residues 1–4 (MVER) are cytoplasmic. A helical; Signal-anchor for type II membrane protein membrane pass occupies residues 5 to 27 (ASKFVLVVAGSACFMLILYQYAG). Residues 28–401 (PGLSLGAPGG…DYMSHIIEKW (374 aa)) are Lumenal-facing. 83–91 (HIQKTGGTT) contacts 3'-phosphoadenylyl sulfate. Substrate is bound by residues 113–114 (KK), arginine 130, tryptophan 135, and histidine 140. The active-site Proton acceptor is histidine 140. Arginine 175 and serine 183 together coordinate 3'-phosphoadenylyl sulfate. Substrate is bound by residues histidine 187 and tryptophan 194. N-linked (GlcNAc...) asparagine glycosylation occurs at asparagine 254. Residue 307–309 (MQY) participates in 3'-phosphoadenylyl sulfate binding. N-linked (GlcNAc...) asparagine glycosylation occurs at asparagine 310. 313–314 (RA) serves as a coordination point for 3'-phosphoadenylyl sulfate. Residues 367–389 (ERLLHRSKEALPREDTEEPGRVP) form a disordered region.

The protein belongs to the sulfotransferase 6 family. In terms of processing, N-glycosylated.

The protein resides in the membrane. It catalyses the reaction alpha-D-glucosaminyl-[heparan sulfate](n) + 3'-phosphoadenylyl sulfate = 6-sulfo-alpha-D-glucosaminyl-[heparan sulfate](n) + adenosine 3',5'-bisphosphate + H(+). With respect to regulation, inhibited by dithiothreitol and stimulated by protamine. 6-O-sulfation enzyme which catalyzes the transfer of sulfate from 3'-phosphoadenosine 5'-phosphosulfate (PAPS) to position 6 of the N-sulfoglucosamine residue (GlcNS) of heparan sulfate. Also transfers sulfate to CDSNS-heparin and performs the crucial step modification in the biosynthesis of anticoagulant heparan sulfate (HSact). Critical for normal neuronal development where it may play a role in neuron branching. May also play a role in limb development. May prefer iduronic acid. The protein is Heparan-sulfate 6-O-sulfotransferase 1 of Cricetulus griseus (Chinese hamster).